The primary structure comprises 174 residues: Protein C2-DOMAIN ABA-RELATED 6 (174 aa).

The region spanning 1–115 (MEKTEEEVEM…HKLGLKELPH (115 aa)) is the C2 domain. Positions 30, 31, 36, 82, 83, 84, and 90 each coordinate Ca(2+).

The protein belongs to the plant CAR protein family. Binds to PYR/PYL/RCAR abscisic acid intracellular receptors in an ABA-independent manner, both at the plasma membrane and in the nucleus. Subunit of a complex made of CAR6, PHOT1 and RPT3/NPH3. Interacts directly with RPT3/NPH3.

The protein resides in the cell membrane. The protein localises to the nucleus. Functionally, stimulates the GTPase/ATPase activities of Obg-like ATPases. Mediates the transient calcium-dependent interaction of PYR/PYL/RCAR abscisic acid (ABA) receptors with the plasma membrane and thus regulates ABA sensitivity. Prevents hypocotyl bending as well as gravitropic response under blue light conditions. This is Protein C2-DOMAIN ABA-RELATED 6 from Arabidopsis thaliana (Mouse-ear cress).